A 188-amino-acid chain; its full sequence is Protein GrpE (188 aa).

This sequence belongs to the GrpE family. Homodimer.

The protein resides in the cytoplasm. In terms of biological role, participates actively in the response to hyperosmotic and heat shock by preventing the aggregation of stress-denatured proteins, in association with DnaK and GrpE. It is the nucleotide exchange factor for DnaK and may function as a thermosensor. Unfolded proteins bind initially to DnaJ; upon interaction with the DnaJ-bound protein, DnaK hydrolyzes its bound ATP, resulting in the formation of a stable complex. GrpE releases ADP from DnaK; ATP binding to DnaK triggers the release of the substrate protein, thus completing the reaction cycle. Several rounds of ATP-dependent interactions between DnaJ, DnaK and GrpE are required for fully efficient folding. The sequence is that of Protein GrpE from Chromobacterium violaceum (strain ATCC 12472 / DSM 30191 / JCM 1249 / CCUG 213 / NBRC 12614 / NCIMB 9131 / NCTC 9757 / MK).